The primary structure comprises 293 residues: LysM and putative peptidoglycan-binding domain-containing protein 4 (293 aa).

The Extracellular portion of the chain corresponds to 1–214 (MRQKEVLAKS…VADGADCGIQ (214 aa)). The interval 28–65 (FNNGSGDSGDSSEEESHQVVLRPRGKEHQKNSSQRPGA) is disordered. N30 carries an N-linked (GlcNAc...) asparagine glycan. Residues 71–115 (LQRELAQEDSLNKLALQYGCKVADIKKANNFIREQDLYALKSIKI) form the LysM domain. A helical membrane pass occupies residues 215 to 235 (WWNAVFLMLLIGIVLPVFYLV). The Cytoplasmic segment spans residues 236–293 (YFKIQATGEPSNGLNATVVPNGSMTLSPVPGQAPRLAIPVPTLPASDSQVSPTTQAGA).

The protein resides in the membrane. The protein is LysM and putative peptidoglycan-binding domain-containing protein 4 (Lysmd4) of Mus musculus (Mouse).